The following is a 168-amino-acid chain: Cyclic pyranopterin monophosphate synthase (168 aa).

Substrate contacts are provided by residues 75 to 77 (MCH) and 115 to 116 (ME). The active site involves D130.

This sequence belongs to the MoaC family. In terms of assembly, homohexamer; trimer of dimers.

It carries out the reaction (8S)-3',8-cyclo-7,8-dihydroguanosine 5'-triphosphate = cyclic pyranopterin phosphate + diphosphate. Its pathway is cofactor biosynthesis; molybdopterin biosynthesis. In terms of biological role, catalyzes the conversion of (8S)-3',8-cyclo-7,8-dihydroguanosine 5'-triphosphate to cyclic pyranopterin monophosphate (cPMP). The protein is Cyclic pyranopterin monophosphate synthase of Bacillus licheniformis (strain ATCC 14580 / DSM 13 / JCM 2505 / CCUG 7422 / NBRC 12200 / NCIMB 9375 / NCTC 10341 / NRRL NRS-1264 / Gibson 46).